Reading from the N-terminus, the 263-residue chain is Oxidoreductase UcpA (263 aa).

Position 10–32 (10–32) interacts with NAD(+); sequence LITGALQGIGEGIARTFARHGAN. Ser-141 is a substrate binding site. The active-site Proton acceptor is the Tyr-155.

The protein belongs to the short-chain dehydrogenases/reductases (SDR) family.

This Escherichia coli (strain K12) protein is Oxidoreductase UcpA (ucpA).